The chain runs to 231 residues: ATP phosphoribosyltransferase (231 aa).

Belongs to the ATP phosphoribosyltransferase family. Short subfamily. Heteromultimer composed of HisG and HisZ subunits.

It is found in the cytoplasm. It catalyses the reaction 1-(5-phospho-beta-D-ribosyl)-ATP + diphosphate = 5-phospho-alpha-D-ribose 1-diphosphate + ATP. It participates in amino-acid biosynthesis; L-histidine biosynthesis; L-histidine from 5-phospho-alpha-D-ribose 1-diphosphate: step 1/9. Catalyzes the condensation of ATP and 5-phosphoribose 1-diphosphate to form N'-(5'-phosphoribosyl)-ATP (PR-ATP). Has a crucial role in the pathway because the rate of histidine biosynthesis seems to be controlled primarily by regulation of HisG enzymatic activity. In Rhizobium etli (strain ATCC 51251 / DSM 11541 / JCM 21823 / NBRC 15573 / CFN 42), this protein is ATP phosphoribosyltransferase (hisG).